We begin with the raw amino-acid sequence, 529 residues long: Probable alpha-galactosidase A (529 aa).

The first 19 residues, methionine 1–alanine 19, serve as a signal peptide directing secretion. A disulfide bridge connects residues cysteine 42 and cysteine 74. N-linked (GlcNAc...) asparagine glycosylation is found at asparagine 45, asparagine 83, asparagine 89, and asparagine 119. Residues cysteine 122 and cysteine 152 are joined by a disulfide bond. Catalysis depends on aspartate 150, which acts as the Nucleophile. An N-linked (GlcNAc...) asparagine glycan is attached at asparagine 199. The active-site Proton donor is the aspartate 208. Residue asparagine 351 is glycosylated (N-linked (GlcNAc...) asparagine). The 121-residue stretch at arginine 408 to glycine 528 folds into the Ricin B-type lectin domain. Intrachain disulfides connect cysteine 425/cysteine 438 and cysteine 462/cysteine 475.

It belongs to the glycosyl hydrolase 27 family.

It localises to the secreted. The catalysed reaction is Hydrolysis of terminal, non-reducing alpha-D-galactose residues in alpha-D-galactosides, including galactose oligosaccharides, galactomannans and galactolipids.. Hydrolyzes a variety of simple alpha-D-galactoside as well as more complex molecules such as oligosaccharides and polysaccharides. In Aspergillus terreus (strain NIH 2624 / FGSC A1156), this protein is Probable alpha-galactosidase A (aglA).